The chain runs to 431 residues: MGKNVVVLGTQWGDEGKGKIVDLLTEQAKYVVRYQGGHNAGHTLVIDGDKTVLHLIPSGILRDNVKCIIGNGVVLAPDALMTEINMLKERGVPVEERLLISEACPLILPFHCALDVAREKARGNNAIGTTGRGIGPAYEDKVSRRGLRVGDLFDAELFATKLKEVMAYHNFMLTEYYKCEAVDYEETLKDALAIADYLKSMCTDVSELLDQARKAGEPILFEGAQGTLLDIDHGTYPFVTSSNTTAGGVATGSGFGPRHLDYVLGIMKAYTTRVGAGPFPTELKNEIGDYLGTKGHEFGATTGRKRRPGWLDVVAMKRAVQINSVSGFCLTKLDVLDGLEEVKICVGYQYPDGTVATTTPLAAEGYEKVTPVLETMPGWSETTFGATSVEQLPQAALNYIKRLEELLETPIDIISTGPDRNETMILVNPFS.

GTP is bound by residues 13-19 (GDEGKGK) and 41-43 (GHT). The Proton acceptor role is filled by Asp14. Mg(2+) is bound by residues Asp14 and Gly41. Residues 14–17 (DEGK), 39–42 (NAGH), Thr130, Arg144, Gln225, Thr240, and Arg304 each bind IMP. His42 serves as the catalytic Proton donor. 300 to 306 (ATTGRKR) contributes to the substrate binding site. Residues Arg306, 332–334 (KLD), and 415–417 (STG) each bind GTP.

This sequence belongs to the adenylosuccinate synthetase family. In terms of assembly, homodimer. Mg(2+) is required as a cofactor.

Its subcellular location is the cytoplasm. The catalysed reaction is IMP + L-aspartate + GTP = N(6)-(1,2-dicarboxyethyl)-AMP + GDP + phosphate + 2 H(+). The protein operates within purine metabolism; AMP biosynthesis via de novo pathway; AMP from IMP: step 1/2. Functionally, plays an important role in the de novo pathway of purine nucleotide biosynthesis. Catalyzes the first committed step in the biosynthesis of AMP from IMP. This is Adenylosuccinate synthetase from Shewanella halifaxensis (strain HAW-EB4).